The primary structure comprises 38 residues: Large ribosomal subunit protein bL36 (38 aa).

This sequence belongs to the bacterial ribosomal protein bL36 family.

In Streptococcus agalactiae serotype III (strain NEM316), this protein is Large ribosomal subunit protein bL36.